The sequence spans 218 residues: Adenylate kinase (218 aa).

ATP is bound at residue 10–15 (GAGKGT). Residues 30–59 (STGDMLRAAVKAGTPLGIAAKKIMDEGGLV) are NMP. Residues Thr-31, Arg-36, 57–59 (GLV), 85–88 (GFPR), and Gln-92 contribute to the AMP site. Positions 122–159 (GRRVHPASGRTYHVKFNPPKVAGRDDVTGEELIQRDDD) are LID. ATP-binding positions include Arg-123 and 132-133 (TY). Residues Arg-156 and Arg-167 each contribute to the AMP site. Gly-203 is a binding site for ATP.

The protein belongs to the adenylate kinase family. In terms of assembly, monomer.

The protein resides in the cytoplasm. The enzyme catalyses AMP + ATP = 2 ADP. Its pathway is purine metabolism; AMP biosynthesis via salvage pathway; AMP from ADP: step 1/1. Catalyzes the reversible transfer of the terminal phosphate group between ATP and AMP. Plays an important role in cellular energy homeostasis and in adenine nucleotide metabolism. This Herminiimonas arsenicoxydans protein is Adenylate kinase.